Here is a 212-residue protein sequence, read N- to C-terminus: ATP phosphoribosyltransferase (212 aa).

The protein belongs to the ATP phosphoribosyltransferase family. Short subfamily. As to quaternary structure, heteromultimer composed of HisG and HisZ subunits.

Its subcellular location is the cytoplasm. It carries out the reaction 1-(5-phospho-beta-D-ribosyl)-ATP + diphosphate = 5-phospho-alpha-D-ribose 1-diphosphate + ATP. The protein operates within amino-acid biosynthesis; L-histidine biosynthesis; L-histidine from 5-phospho-alpha-D-ribose 1-diphosphate: step 1/9. Catalyzes the condensation of ATP and 5-phosphoribose 1-diphosphate to form N'-(5'-phosphoribosyl)-ATP (PR-ATP). Has a crucial role in the pathway because the rate of histidine biosynthesis seems to be controlled primarily by regulation of HisG enzymatic activity. The chain is ATP phosphoribosyltransferase from Citrifermentans bemidjiense (strain ATCC BAA-1014 / DSM 16622 / JCM 12645 / Bem) (Geobacter bemidjiensis).